The chain runs to 221 residues: Prolactin-3B1 (221 aa).

An N-terminal signal peptide occupies residues 1-30; the sequence is MQLPLTPLSFSGTLLLMAMSNFLLWEHVTS. 2 disulfide bridges follow: Cys81-Cys196 and Cys213-Cys221.

This sequence belongs to the somatotropin/prolactin family.

Its subcellular location is the secreted. This chain is Prolactin-3B1 (PRL3B1), found in Mesocricetus auratus (Golden hamster).